Here is a 467-residue protein sequence, read N- to C-terminus: Matrix metalloproteinase-18 (467 aa).

A signal peptide spans M1 to A17. Residues F18–Q99 constitute a propeptide that is removed on maturation. The short motif at P90–V97 is the Cysteine switch element. 2 residues coordinate Zn(2+): C92 and H218. The active site involves E219. Zn(2+) contacts are provided by H222 and H228. Hemopexin repeat units follow at residues P277 to L326, P327 to K373, V375 to I423, and P424 to C467. A disulfide bridge links C280 with C467.

Belongs to the peptidase M10A family. It depends on Zn(2+) as a cofactor. Requires Ca(2+) as cofactor. As to expression, expressed only transiently in whole animal, at time when tadpole feeding begins.

Its subcellular location is the secreted. It localises to the extracellular space. It is found in the extracellular matrix. Its activity is regulated as follows. Up-regulated in the tail by thyroid hormone. Its function is as follows. Cleaves collagen type I. May play a role in larval tissue degeneration and adult organogenesis during amphibian metamorphosis. May be involved in tail resorption. The sequence is that of Matrix metalloproteinase-18 (mmp18) from Xenopus laevis (African clawed frog).